Here is a 286-residue protein sequence, read N- to C-terminus: Shikimate dehydrogenase (NADP(+)) (286 aa).

Shikimate-binding positions include 19–21 (SLS) and Thr66. The Proton acceptor role is filled by Lys70. Asn91 and Asp107 together coordinate shikimate. NADP(+)-binding positions include 129 to 133 (GSGGA) and Leu229. Tyr231 is a binding site for shikimate. Residue Gly252 participates in NADP(+) binding.

This sequence belongs to the shikimate dehydrogenase family. As to quaternary structure, homodimer.

The enzyme catalyses shikimate + NADP(+) = 3-dehydroshikimate + NADPH + H(+). The protein operates within metabolic intermediate biosynthesis; chorismate biosynthesis; chorismate from D-erythrose 4-phosphate and phosphoenolpyruvate: step 4/7. Involved in the biosynthesis of the chorismate, which leads to the biosynthesis of aromatic amino acids. Catalyzes the reversible NADPH linked reduction of 3-dehydroshikimate (DHSA) to yield shikimate (SA). The protein is Shikimate dehydrogenase (NADP(+)) of Prochlorococcus marinus (strain AS9601).